Consider the following 492-residue polypeptide: MTKDNSEYLIERRDNVYEVVIGLEVHAQVTSNSKLFSSSSTTFGAEPNTQVSLVDAAFPGMLPVINEYCVKQAIKTGIGLRAQINKRSVFDRKNYFYADLPQGYQISQFKYPIVGEGTVILDMAHGQKEVGIERLHLEQDAGKSIHDMDPQNTLVDLNRSGVALMEIVSKPDMRTPDEVSAYIKKLRSIMRYLGTCDGNMQEGSLRADVNISVRIKGSDKLGTRCEIKNVNSIKFMQMAIDYEANRQVDLIEDGKTIDQETRLFDTKKNETRSMRSKEDAHDYRYFPDPDLLPLEVTDEFIEKLKADIPELPDDKKKRFIDEFKVSAYEATILVSDIETAKYFEEVVAKMGKNKDMKLAVNWITGELFAVLNNKNLEISESPVSAKNLAKLINLIKNGTISGKIAKTIFELMIDGDIDPQIIVEEKGLKQESDPKALEALIDKIIDTNREKAIEYKNGKEKLFGFFVGQAMKVSGGKANPQLINEILKKKLQ.

This sequence belongs to the GatB/GatE family. GatB subfamily. As to quaternary structure, heterotrimer of A, B and C subunits.

The enzyme catalyses L-glutamyl-tRNA(Gln) + L-glutamine + ATP + H2O = L-glutaminyl-tRNA(Gln) + L-glutamate + ADP + phosphate + H(+). It catalyses the reaction L-aspartyl-tRNA(Asn) + L-glutamine + ATP + H2O = L-asparaginyl-tRNA(Asn) + L-glutamate + ADP + phosphate + 2 H(+). In terms of biological role, allows the formation of correctly charged Asn-tRNA(Asn) or Gln-tRNA(Gln) through the transamidation of misacylated Asp-tRNA(Asn) or Glu-tRNA(Gln) in organisms which lack either or both of asparaginyl-tRNA or glutaminyl-tRNA synthetases. The reaction takes place in the presence of glutamine and ATP through an activated phospho-Asp-tRNA(Asn) or phospho-Glu-tRNA(Gln). The chain is Aspartyl/glutamyl-tRNA(Asn/Gln) amidotransferase subunit B from Pelagibacter ubique (strain HTCC1062).